The chain runs to 297 residues: Acetylglutamate kinase (297 aa).

Substrate contacts are provided by residues 64 to 65, Arg-86, and Asn-190; that span reads GG.

Belongs to the acetylglutamate kinase family. ArgB subfamily.

It is found in the cytoplasm. It catalyses the reaction N-acetyl-L-glutamate + ATP = N-acetyl-L-glutamyl 5-phosphate + ADP. Its pathway is amino-acid biosynthesis; L-arginine biosynthesis; N(2)-acetyl-L-ornithine from L-glutamate: step 2/4. Its function is as follows. Catalyzes the ATP-dependent phosphorylation of N-acetyl-L-glutamate. The chain is Acetylglutamate kinase from Solidesulfovibrio magneticus (strain ATCC 700980 / DSM 13731 / RS-1) (Desulfovibrio magneticus).